We begin with the raw amino-acid sequence, 73 residues long: Conotoxin CnIIIE (73 aa).

Positions 1-19 (MSKLGVLLTICLLLFPLTA) are cleaved as a signal peptide. The propeptide occupies 20-49 (LPMDGDQSVDRPAERMQDDISSEQYPLFNQ). 3 cysteine pairs are disulfide-bonded: C53/C72, C54/C70, and C60/C73.

The protein belongs to the conotoxin M superfamily. In terms of tissue distribution, expressed by the venom duct.

It localises to the secreted. In terms of biological role, shows a paralytic effect in fish. The chain is Conotoxin CnIIIE from Conus consors (Singed cone).